The primary structure comprises 185 residues: MSEKAKLIQLIHIGKQQLNMDEFSYREMVKRLTNKTSSTKCTVVELLKILHEMQQKGAKVKHFAKRGTKPTAYSPATGEVKVKSEIAHKIRAVWIQMGKHGFLADPSXKALNSYMRKVMNKGKSVLALNVGALNSNDASRFLEILKKWHKRVMLKRLAEKYGCITSAETGYDELCLVFKNYQGVA.

The protein to phage Mu protein gp16.

This Haemophilus influenzae (strain ATCC 51907 / DSM 11121 / KW20 / Rd) protein is Mu-like prophage FluMu protein gp16.